The sequence spans 262 residues: Phosphonates import ATP-binding protein PhnC (262 aa).

An ABC transporter domain is found at 5–253; sequence IRVEKLAKTF…RFDHLYRSIN (249 aa). Residue 37–44 coordinates ATP; sequence GPSGSGKS.

The protein belongs to the ABC transporter superfamily. Phosphonates importer (TC 3.A.1.9.1) family. As to quaternary structure, the complex is composed of two ATP-binding proteins (PhnC), two transmembrane proteins (PhnE) and a solute-binding protein (PhnD).

The protein resides in the cell inner membrane. It carries out the reaction phosphonate(out) + ATP + H2O = phosphonate(in) + ADP + phosphate + H(+). In terms of biological role, part of the ABC transporter complex PhnCDE involved in phosphonates, phosphate esters, phosphite and phosphate import. Responsible for energy coupling to the transport system. This Escherichia coli (strain K12) protein is Phosphonates import ATP-binding protein PhnC.